The chain runs to 467 residues: ATP synthase subunit beta (467 aa).

ATP is bound at residue 154 to 161 (GGAGVGKT).

It belongs to the ATPase alpha/beta chains family. As to quaternary structure, F-type ATPases have 2 components, CF(1) - the catalytic core - and CF(0) - the membrane proton channel. CF(1) has five subunits: alpha(3), beta(3), gamma(1), delta(1), epsilon(1). CF(0) has three main subunits: a(1), b(2) and c(9-12). The alpha and beta chains form an alternating ring which encloses part of the gamma chain. CF(1) is attached to CF(0) by a central stalk formed by the gamma and epsilon chains, while a peripheral stalk is formed by the delta and b chains.

The protein resides in the cell inner membrane. The enzyme catalyses ATP + H2O + 4 H(+)(in) = ADP + phosphate + 5 H(+)(out). Produces ATP from ADP in the presence of a proton gradient across the membrane. The catalytic sites are hosted primarily by the beta subunits. This chain is ATP synthase subunit beta, found in Petrotoga mobilis (strain DSM 10674 / SJ95).